Consider the following 547-residue polypeptide: Phenylalanine--tRNA ligase beta subunit (547 aa).

In terms of domain architecture, B5 spans 269–344 (LDVRFMEVDV…IGYGYENITP (76 aa)). Residues Asp322, Asp328, Glu331, and Asp332 each contribute to the Mg(2+) site.

The protein belongs to the phenylalanyl-tRNA synthetase beta subunit family. Type 2 subfamily. Tetramer of two alpha and two beta subunits. Mg(2+) is required as a cofactor.

It is found in the cytoplasm. It catalyses the reaction tRNA(Phe) + L-phenylalanine + ATP = L-phenylalanyl-tRNA(Phe) + AMP + diphosphate + H(+). The protein is Phenylalanine--tRNA ligase beta subunit of Archaeoglobus fulgidus (strain ATCC 49558 / DSM 4304 / JCM 9628 / NBRC 100126 / VC-16).